Reading from the N-terminus, the 108-residue chain is Large ribosomal subunit protein bL31B (108 aa).

Positions 81 to 108 (KPAQPVQAPAEEGPVVKGKKKAPAKKKK) are disordered. Residues 97-108 (KGKKKAPAKKKK) are compositionally biased toward basic residues.

Belongs to the bacterial ribosomal protein bL31 family. Type B subfamily. As to quaternary structure, part of the 50S ribosomal subunit.

This is Large ribosomal subunit protein bL31B from Chlamydia caviae (strain ATCC VR-813 / DSM 19441 / 03DC25 / GPIC) (Chlamydophila caviae).